A 489-amino-acid chain; its full sequence is Phenylalanine--tRNA ligase alpha subunit (489 aa).

L-phenylalanine is bound by residues Thr-316, 355–357 (QLD), Phe-395, and Phe-420.

This sequence belongs to the class-II aminoacyl-tRNA synthetase family. Phe-tRNA synthetase alpha subunit type 2 subfamily. As to quaternary structure, tetramer of two alpha and two beta subunits. Mg(2+) serves as cofactor.

The protein resides in the cytoplasm. It carries out the reaction tRNA(Phe) + L-phenylalanine + ATP = L-phenylalanyl-tRNA(Phe) + AMP + diphosphate + H(+). The polypeptide is Phenylalanine--tRNA ligase alpha subunit (Pyrobaculum aerophilum (strain ATCC 51768 / DSM 7523 / JCM 9630 / CIP 104966 / NBRC 100827 / IM2)).